Reading from the N-terminus, the 279-residue chain is Movement protein (279 aa).

The segment at 246-279 (SESEELNVESPPAAIGSSSASRSEAFRPQVVNGL) is disordered. Over residues 254 to 268 (ESPPAAIGSSSASRS) the composition is skewed to low complexity.

It belongs to the cucumovirus movement protein family.

The protein localises to the host cell junction. The protein resides in the host plasmodesma. In terms of biological role, transports viral genome to neighboring plant cells directly through plasmosdesmata, without any budding. The movement protein allows efficient cell to cell propagation, by bypassing the host cell wall barrier. Acts by forming a tubular structure at the host plasmodesmata, enlarging it enough to allow free passage of virion capsids. The protein is Movement protein of Cucumber mosaic virus (strain O) (CMV).